A 197-amino-acid chain; its full sequence is Glycerol-3-phosphate acyltransferase (197 aa).

The next 4 membrane-spanning stretches (helical) occupy residues 5–25 (LILI…VGKI), 70–90 (LPVL…AVIG), 111–131 (VMLF…FIVL), and 153–173 (IFFT…AFIF).

Belongs to the PlsY family. In terms of assembly, probably interacts with PlsX.

Its subcellular location is the cell membrane. It catalyses the reaction an acyl phosphate + sn-glycerol 3-phosphate = a 1-acyl-sn-glycero-3-phosphate + phosphate. The protein operates within lipid metabolism; phospholipid metabolism. Catalyzes the transfer of an acyl group from acyl-phosphate (acyl-PO(4)) to glycerol-3-phosphate (G3P) to form lysophosphatidic acid (LPA). This enzyme utilizes acyl-phosphate as fatty acyl donor, but not acyl-CoA or acyl-ACP. This chain is Glycerol-3-phosphate acyltransferase, found in Geobacillus sp. (strain WCH70).